Consider the following 497-residue polypeptide: MAMLGFYVTFIFFLVCLFTYFFLQKKPQGQPILKNWPFLRMLPGMLHQIPRIYDWTVEVLEATNLTFYFKGPWLSGTDMLFTADPRNIHHILSSNFGNYPKGPEFKKIFDVLGEGILTVDFELWEEMRKSNHALFHNQDFIELSVSSNKSKLKEGLVPFLDNAAQKNIIIELQDVFQRFMFDTSSILMTGYDPMSLSIEMLEVEFGEAADIGEEAIYYRHFKPVILWRLQNWIGIGLERKMRTALATVNRMFAKIISSRRKEEISRAKTEPYSKDALTYYMNVDTSKYKLLKPNKDKFIRDVIFSLVLAGRDTTSSVLTWFFWLLSKHPQVMAKLRHEINTKFDNEDLEKLVYLHAALSESMRLYPPLPFNHKSPAKPDVLPSGHKVDANSKIVICIYALGRMRSVWGEDALDFKPERWISDNGGLRHEPSYKFMAFNSGPRTCLGKNLALLQMKMVALEIIRNYDFKVIEGHKVEPIPSILLRMKHGLKVTVTKKI.

A helical membrane pass occupies residues 3–23 (MLGFYVTFIFFLVCLFTYFFL). Cys-444 serves as a coordination point for heme.

It belongs to the cytochrome P450 family. Requires heme as cofactor. In terms of tissue distribution, expressed in the expanding regions of the inflorescence stems, specifically to the epidermal pavement cells, petioles and siliques.

Its subcellular location is the endoplasmic reticulum membrane. Functionally, involved in the formation of secondary alcohols and ketones in stem cuticular wax. Catalyzes the hydroxylation of a methylene unit in the middle of alkane molecules to form secondary alcohols and possibly also a second hydroxylation leading to the corresponding ketones. This Arabidopsis thaliana (Mouse-ear cress) protein is Alkane hydroxylase MAH1.